We begin with the raw amino-acid sequence, 1405 residues long: DNA-directed RNA polymerase subunit beta' (1405 aa).

Zn(2+) contacts are provided by C70, C72, C85, and C88. Positions 460, 462, and 464 each coordinate Mg(2+). Zn(2+) is bound by residues C815, C890, C897, and C900.

This sequence belongs to the RNA polymerase beta' chain family. In terms of assembly, the RNAP catalytic core consists of 2 alpha, 1 beta, 1 beta' and 1 omega subunit. When a sigma factor is associated with the core the holoenzyme is formed, which can initiate transcription. The cofactor is Mg(2+). Zn(2+) serves as cofactor.

The catalysed reaction is RNA(n) + a ribonucleoside 5'-triphosphate = RNA(n+1) + diphosphate. Functionally, DNA-dependent RNA polymerase catalyzes the transcription of DNA into RNA using the four ribonucleoside triphosphates as substrates. The sequence is that of DNA-directed RNA polymerase subunit beta' from Xanthomonas campestris pv. campestris (strain 8004).